The chain runs to 57 residues: Small ribosomal subunit protein eS27 (57 aa).

Zn(2+) is bound by residues C10, C13, C29, and C32. A C4-type zinc finger spans residues 10–32 (CPDCENEQSLFEKAASEVSCAVC).

Belongs to the eukaryotic ribosomal protein eS27 family. As to quaternary structure, part of the 30S ribosomal subunit. Zn(2+) is required as a cofactor.

The chain is Small ribosomal subunit protein eS27 from Haloarcula marismortui (strain ATCC 43049 / DSM 3752 / JCM 8966 / VKM B-1809) (Halobacterium marismortui).